We begin with the raw amino-acid sequence, 374 residues long: Histidinol-phosphate aminotransferase (374 aa).

Position 211 is an N6-(pyridoxal phosphate)lysine (K211). Over residues G351–D368 the composition is skewed to low complexity. The disordered stretch occupies residues G351–N374.

The protein belongs to the class-II pyridoxal-phosphate-dependent aminotransferase family. Histidinol-phosphate aminotransferase subfamily. Homodimer. It depends on pyridoxal 5'-phosphate as a cofactor.

It catalyses the reaction L-histidinol phosphate + 2-oxoglutarate = 3-(imidazol-4-yl)-2-oxopropyl phosphate + L-glutamate. It participates in amino-acid biosynthesis; L-histidine biosynthesis; L-histidine from 5-phospho-alpha-D-ribose 1-diphosphate: step 7/9. This is Histidinol-phosphate aminotransferase from Photobacterium profundum (strain SS9).